The following is a 75-amino-acid chain: Pro-glucagon (75 aa).

The protein belongs to the glucagon family.

It is found in the secreted. Plays a key role in glucose metabolism and homeostasis. Regulates blood glucose by increasing gluconeogenesis and decreasing glycolysis. The sequence is that of Pro-glucagon (gcg) from Amia calva (Bowfin).